Here is a 1133-residue protein sequence, read N- to C-terminus: ATP-dependent DNA helicase homolog MER3 (1133 aa).

The 196-residue stretch at 34–229 folds into the Helicase ATP-binding domain; sequence PLCFHSDINM…WLKVPTAGIK (196 aa). Position 47–54 (47–54) interacts with ATP; the sequence is APTGSGKT. Residues 165-168 carry the DEVH box motif; the sequence is DEVH. Positions 263 to 460 constitute a Helicase C-terminal domain; it reads YIYDILMQYS…CLIEHLTAEI (198 aa). The region spanning 536–847 is the SEC63 domain; sequence EPGRLMTKYY…FEEYIGIDLH (312 aa). A disordered region spans residues 878–919; sequence ACIADDDNPVTSGPSNRKDKKDDMPSFKLIDDDSEEEKEPYV. A compositionally biased stretch (basic and acidic residues) spans 893 to 908; sequence NRKDKKDDMPSFKLID. Acidic residues predominate over residues 909-919; sequence DDSEEEKEPYV.

Belongs to the helicase family. SKI2 subfamily. As to expression, expressed in meiocytes during meiosis.

The protein localises to the nucleus. The catalysed reaction is Couples ATP hydrolysis with the unwinding of duplex DNA by translocating in the 3'-5' direction.. It catalyses the reaction ATP + H2O = ADP + phosphate + H(+). In terms of biological role, DNA helicase required for crossover formation, complete synapsis of homologous chromosomes and bivalent formation during meiosis. Is specific to recombination events resulting in interference-sensitive crossovers (class I meiotic crossover). The sequence is that of ATP-dependent DNA helicase homolog MER3 from Arabidopsis thaliana (Mouse-ear cress).